We begin with the raw amino-acid sequence, 403 residues long: Golgin-45 (403 aa).

The segment at 1-63 (MEKMTTLKSS…PRKKVSSDSP (63 aa)) is disordered. A Tankyrase-binding motif motif is present at residues 22–26 (RGAGD). At S53 the chain carries Phosphoserine. Residues 123-216 (RKELSEVKKV…QLERMSIQCD (94 aa)) are a coiled coil. Residue S356 is modified to Phosphoserine. The interval 397-403 (QGELIAL) is essential for interaction with GORASP2.

In terms of assembly, interacts with GORASP2. Interacts with the GTP-bound form of RAB2, but not with other Golgi Rab proteins. Identified in a complex with RAB2 and GORASP2. In terms of processing, ADP-ribosylated by tankyrase TNKS and TNKS2. Poly-ADP-ribosylated protein is recognized by RNF146, followed by ubiquitination. Post-translationally, ubiquitinated by RNF146 when poly-ADP-ribosylated, leading to its degradation.

Its subcellular location is the golgi apparatus membrane. Required for normal Golgi structure and for protein transport from the endoplasmic reticulum (ER) through the Golgi apparatus to the cell surface. This chain is Golgin-45 (Blzf1), found in Mus musculus (Mouse).